The chain runs to 197 residues: Nucleoid occlusion factor SlmA (197 aa).

The 61-residue stretch at isoleucine 7–leucine 67 folds into the HTH tetR-type domain. Residues threonine 30–phenylalanine 49 constitute a DNA-binding region (H-T-H motif).

The protein belongs to the nucleoid occlusion factor SlmA family. In terms of assembly, homodimer. Interacts with FtsZ.

The protein resides in the cytoplasm. Its subcellular location is the nucleoid. Required for nucleoid occlusion (NO) phenomenon, which prevents Z-ring formation and cell division over the nucleoid. Acts as a DNA-associated cell division inhibitor that binds simultaneously chromosomal DNA and FtsZ, and disrupts the assembly of FtsZ polymers. SlmA-DNA-binding sequences (SBS) are dispersed on non-Ter regions of the chromosome, preventing FtsZ polymerization at these regions. The chain is Nucleoid occlusion factor SlmA from Shewanella amazonensis (strain ATCC BAA-1098 / SB2B).